A 119-amino-acid polypeptide reads, in one-letter code: Succinate dehydrogenase assembly factor 2, mitochondrial (119 aa).

This sequence belongs to the SDHAF2 family. As to quaternary structure, interacts with the flavoprotein subunit within the SDH catalytic dimer.

The protein resides in the mitochondrion matrix. Functionally, plays an essential role in the assembly of succinate dehydrogenase (SDH), an enzyme complex (also referred to as respiratory complex II) that is a component of both the tricarboxylic acid (TCA) cycle and the mitochondrial electron transport chain, and which couples the oxidation of succinate to fumarate with the reduction of ubiquinone (coenzyme Q) to ubiquinol. Required for flavinylation (covalent attachment of FAD) of the flavoprotein subunit of the SDH catalytic dimer. The sequence is that of Succinate dehydrogenase assembly factor 2, mitochondrial from Caenorhabditis elegans.